Reading from the N-terminus, the 523-residue chain is GMP synthase [glutamine-hydrolyzing] (523 aa).

Residues 9-198 enclose the Glutamine amidotransferase type-1 domain; the sequence is PVLVVDFGAQ…LTEIAGLEQN (190 aa). Cys-86 serves as the catalytic Nucleophile. Catalysis depends on residues His-172 and Glu-174. A GMPS ATP-PPase domain is found at 199–397; that stretch reads WTAANIAEEL…LGLPEEIVGR (199 aa). An ATP-binding site is contributed by 227-233; the sequence is SGGVDSA.

As to quaternary structure, homodimer.

The enzyme catalyses XMP + L-glutamine + ATP + H2O = GMP + L-glutamate + AMP + diphosphate + 2 H(+). It participates in purine metabolism; GMP biosynthesis; GMP from XMP (L-Gln route): step 1/1. Functionally, catalyzes the synthesis of GMP from XMP. This is GMP synthase [glutamine-hydrolyzing] from Corynebacterium glutamicum (strain ATCC 13032 / DSM 20300 / JCM 1318 / BCRC 11384 / CCUG 27702 / LMG 3730 / NBRC 12168 / NCIMB 10025 / NRRL B-2784 / 534).